We begin with the raw amino-acid sequence, 475 residues long: Ataxin-10 (475 aa).

Arg10 bears the Omega-N-methylarginine mark. A phosphoserine mark is found at Ser12 and Ser77. Thr82 is modified (phosphothreonine). Phosphoserine is present on Ser430.

This sequence belongs to the ataxin-10 family. Homooligomer. Interacts with GNB2. Interacts with IQCB1. Interacts with OGT. Interacts with PLK1. Polyubiquitinated. In terms of processing, phosphorylation at Ser-12 by AURKB promotes the association of ATXN10 with PLK1. Phosphorylation at Ser-77 and Thr-82 by PLK1 may play a role in the regulation of cytokinesis and may stimulate the proteasome-mediated degradation of ATXN10. In terms of tissue distribution, in high cell density areas; cerebellar cortex, dentate gyrus, hippocampus, anterior olfactory nucleus, primary olfactory cortex.

It is found in the cytoplasm. Its subcellular location is the perinuclear region. It localises to the midbody. The protein resides in the cytoskeleton. The protein localises to the cilium basal body. It is found in the microtubule organizing center. Its subcellular location is the centrosome. It localises to the centriole. Functionally, may play a role in the regulation of cytokinesis. May play a role in signaling by stimulating protein glycosylation. Induces neuritogenesis by activating the Ras-MAP kinase pathway and is necessary for the survival of cerebellar neurons. Does not appear to play a major role in ciliogenesis. The protein is Ataxin-10 (Atxn10) of Mus musculus (Mouse).